The primary structure comprises 499 residues: Neuropeptide CCHamide-1 receptor (499 aa).

At 1–85 (MIANLVSMET…GRRPETYIVP (85 aa)) the chain is on the extracellular side. N-linked (GlcNAc...) asparagine glycans are attached at residues Asn33 and Asn61. Residues 86 to 106 (ILFALIFVVGVLGNGTLIVVF) form a helical membrane-spanning segment. Residues 107–117 (LSVRQMRNVPN) lie on the Cytoplasmic side of the membrane. Residues 118–138 (TYILSLALADLLVIITTVPLA) form a helical membrane-spanning segment. Residues 139–162 (STVYTVEYWPYGSFLCSLSEFMKD) lie on the Extracellular side of the membrane. Cys154 and Cys240 are joined by a disulfide. A helical membrane pass occupies residues 163–183 (VSIGVSVFTLTALSGDRYFAI). Residues 184–203 (VDPLRKFHAHGGGRRATRMT) lie on the Cytoplasmic side of the membrane. Residues 204 to 224 (LATAVSIWLLAILCGLPALIG) form a helical membrane-spanning segment. Topologically, residues 225 to 259 (SNLKHLGINEKSIVICYPYPEEWGINYAKSMVLLH) are extracellular. The helical transmembrane segment at 260–280 (FLVYYAIPLVVIAVFYVLIAL) threads the bilayer. The Cytoplasmic segment spans residues 281–309 (HLMYSASVPGEIQGAVRQVRARRKVAVTV). Residues 310–330 (LAFVVIFGICFLPYHVFFLWF) traverse the membrane as a helical segment. The Extracellular segment spans residues 331–348 (YFWPTAQDDYNAFWHVLR). The chain crosses the membrane as a helical span at residues 349 to 369 (IVAYCMSFANSCANPVALYFV). At 370–499 (SGAFRKHFNR…PAKFQESLLN (130 aa)) the chain is on the cytoplasmic side.

Belongs to the G-protein coupled receptor 1 family. As to expression, low levels in larval brain and gut with higher levels in adult brain and gut. In the brain expression is widely distributed, including strong expression in the mushroom bodies. Expressed weakly in s-LNv (small ventral lateral neurons) and strongly in l-LNv (large ventral lateral neurons), but not in other clock neurons.

It localises to the cell membrane. Receptor for the neuropeptide CCHamide-1. Plays a role in the modulation of starvation-induced olfactory behavior where starved flies show increased responsiveness to food odorants, repellants and pheromones. Contributes to regulation of sleep latency (the time required to fall asleep), amount of sleep and depth of sleep (arousability). Involved in modulation of PDP1 and PDF levels in s-LNv (small ventral lateral neurons) clock neurons in response to CCHa1 released by DN1a (anterior dorsal neurons 1) clock neurons, to regulate morning activity. In a subset of dopaminergic cells in the protocerebral anterior medial (PAM) cluster involved in suppressing arousability in response to CCHa1 secreted by gut enteroendocrine cells. This is Neuropeptide CCHamide-1 receptor from Drosophila melanogaster (Fruit fly).